Consider the following 449-residue polypeptide: Exopolygalacturonase X-2 (449 aa).

A signal peptide spans 1 to 24; it reads MGFKRTIGLLLGILLALDQVSVLA. Residues asparagine 136, asparagine 172, and asparagine 208 are each glycosylated (N-linked (GlcNAc...) asparagine). The PbH1 1 repeat unit spans residues 240 to 261; the sequence is SDNVVIQNSVINHDDDCVSFKP. The Proton donor role is filled by aspartate 254. A disulfide bridge connects residues cysteine 256 and cysteine 273. N-linked (GlcNAc...) asparagine glycans are attached at residues asparagine 262 and asparagine 274. PbH1 repeat units follow at residues 263 to 283 and 294 to 315; these read STNI…SVGS and VSDL…RLKV. Residue histidine 277 is part of the active site. Residues asparagine 301, asparagine 306, asparagine 340, and asparagine 365 are each glycosylated (N-linked (GlcNAc...) asparagine). Cysteine 403 and cysteine 409 are joined by a disulfide. Residues asparagine 416 and asparagine 421 are each glycosylated (N-linked (GlcNAc...) asparagine).

This sequence belongs to the glycosyl hydrolase 28 family.

It localises to the secreted. It catalyses the reaction [(1-&gt;4)-alpha-D-galacturonosyl](n) + H2O = alpha-D-galacturonate + [(1-&gt;4)-alpha-D-galacturonosyl](n-1). Specific in hydrolyzing the terminal glycosidic bond of polygalacturonic acid and oligogalacturonates. This Emericella nidulans (strain FGSC A4 / ATCC 38163 / CBS 112.46 / NRRL 194 / M139) (Aspergillus nidulans) protein is Exopolygalacturonase X-2 (pgaX-2).